Reading from the N-terminus, the 191-residue chain is Thymidine kinase (191 aa).

Residues 9-16 (GSMNSGKT) and 85-88 (DESQ) each bind ATP. E86 functions as the Proton acceptor in the catalytic mechanism. Zn(2+)-binding residues include C143, C146, C181, and C184.

The protein belongs to the thymidine kinase family. Homotetramer.

Its subcellular location is the cytoplasm. It carries out the reaction thymidine + ATP = dTMP + ADP + H(+). The polypeptide is Thymidine kinase (Listeria monocytogenes serotype 4b (strain F2365)).